We begin with the raw amino-acid sequence, 255 residues long: 3-deoxy-manno-octulosonate cytidylyltransferase (255 aa).

It belongs to the KdsB family.

It is found in the cytoplasm. It carries out the reaction 3-deoxy-alpha-D-manno-oct-2-ulosonate + CTP = CMP-3-deoxy-beta-D-manno-octulosonate + diphosphate. The protein operates within nucleotide-sugar biosynthesis; CMP-3-deoxy-D-manno-octulosonate biosynthesis; CMP-3-deoxy-D-manno-octulosonate from 3-deoxy-D-manno-octulosonate and CTP: step 1/1. It functions in the pathway bacterial outer membrane biogenesis; lipopolysaccharide biosynthesis. Its function is as follows. Activates KDO (a required 8-carbon sugar) for incorporation into bacterial lipopolysaccharide in Gram-negative bacteria. This is 3-deoxy-manno-octulosonate cytidylyltransferase from Hahella chejuensis (strain KCTC 2396).